The following is a 90-amino-acid chain: Small ribosomal subunit protein bS18 (90 aa).

It belongs to the bacterial ribosomal protein bS18 family. As to quaternary structure, part of the 30S ribosomal subunit. Forms a tight heterodimer with protein bS6.

Its function is as follows. Binds as a heterodimer with protein bS6 to the central domain of the 16S rRNA, where it helps stabilize the platform of the 30S subunit. The chain is Small ribosomal subunit protein bS18 from Porphyromonas gingivalis (strain ATCC 33277 / DSM 20709 / CIP 103683 / JCM 12257 / NCTC 11834 / 2561).